The primary structure comprises 92 residues: Transcription factor PRE5 (92 aa).

The 56-residue stretch at 4 to 59 (RRSRQTSNASRISDDQMIDLVSKLRQFLPEIHERRRSDKVSASKVLQETCNYIRKL) folds into the bHLH domain.

This sequence belongs to the bHLH protein family. In terms of assembly, interacts with IBH1.

It is found in the nucleus. Its function is as follows. Atypical and probable non DNA-binding bHLH transcription factor that integrates multiple signaling pathways to regulate cell elongation and plant development. May have a regulatory role in various aspects of gibberellin-dependent growth and development. The polypeptide is Transcription factor PRE5 (PRE5) (Arabidopsis thaliana (Mouse-ear cress)).